The primary structure comprises 113 residues: MKIMEIEKTNRMNALFEFYAALLTDKQMNYIELYYADDYSLAEIAEEFGVSRQAVYDNIKRTEKILEAYEMKLHMYSDYIVRSEIFDDILAKYPSDHYLRDKISILTSIDNRD.

It belongs to the UPF0122 family.

In terms of biological role, might take part in the signal recognition particle (SRP) pathway. This is inferred from the conservation of its genetic proximity to ftsY/ffh. May be a regulatory protein. This is UPF0122 protein Sez_1013 from Streptococcus equi subsp. zooepidemicus (strain MGCS10565).